The sequence spans 309 residues: Olfactory receptor 5B21 (309 aa).

At 1–26 the chain is on the extracellular side; sequence MENSTEVTEFILLGLTDDPNLQIPLL. An N-linked (GlcNAc...) asparagine glycan is attached at Asn-3. A helical transmembrane segment spans residues 27–47; sequence LAFLFIYLITLLGNGGMMVII. The Cytoplasmic segment spans residues 48–55; the sequence is HSDSHLHT. The helical transmembrane segment at 56-76 threads the bilayer; the sequence is PMYFFLSNLSLVDLGYSSAVA. The Extracellular portion of the chain corresponds to 77 to 95; the sequence is PKTVAALRSGDKAISYDGC. An intrachain disulfide couples Cys-95 to Cys-177. Residues 96 to 116 form a helical membrane-spanning segment; the sequence is AAQFFFFVGFATVECYLLASM. The Cytoplasmic portion of the chain corresponds to 117 to 137; it reads AYDRHAAVCRPLHYTTTMTAG. Residues 138 to 158 traverse the membrane as a helical segment; sequence VCALLATGSYVSGFLNASIHA. Residues 159–199 are Extracellular-facing; that stretch reads AGTFRLSFCGSNEINHFFCDIPPLLALSCSDTRISKLVVFV. The chain crosses the membrane as a helical span at residues 200–220; sequence AGFNVFFTLLVILISYFFICI. Over 221–235 the chain is Cytoplasmic; it reads TIQRMHSAEGQKKVF. A helical membrane pass occupies residues 236–256; it reads STCASHLTALSIFYGTIIFMY. Residues 257-270 lie on the Extracellular side of the membrane; sequence LQPNSSQSVDTDKI. Asn-260 is a glycosylation site (N-linked (GlcNAc...) asparagine). Residues 271–291 traverse the membrane as a helical segment; sequence ASVFYTVVIPMLNPLIYSLRN. The Cytoplasmic segment spans residues 292 to 309; the sequence is KEVKSALWKILNKLYPQY.

Belongs to the G-protein coupled receptor 1 family.

It is found in the cell membrane. Odorant receptor. This is Olfactory receptor 5B21 from Homo sapiens (Human).